The primary structure comprises 62 residues: Small ribosomal subunit protein bS21 (62 aa).

A disordered region spans residues 43 to 62; the sequence is EKRKRKAMALQKQRKRRSRY. Positions 44-62 are enriched in basic residues; that stretch reads KRKRKAMALQKQRKRRSRY.

Belongs to the bacterial ribosomal protein bS21 family.

The polypeptide is Small ribosomal subunit protein bS21 (Trichodesmium erythraeum (strain IMS101)).